The sequence spans 81 residues: Large ribosomal subunit protein bL31B (81 aa).

This sequence belongs to the bacterial ribosomal protein bL31 family. Type B subfamily. In terms of assembly, part of the 50S ribosomal subunit.

The sequence is that of Large ribosomal subunit protein bL31B from Bdellovibrio bacteriovorus (strain ATCC 15356 / DSM 50701 / NCIMB 9529 / HD100).